Here is a 380-residue protein sequence, read N- to C-terminus: Chaperone protein DnaJ (380 aa).

The J domain occupies 5-70 (DYYEVLGVAK…QKRAAYDQYG (66 aa)). A CR-type zinc finger spans residues 140–218 (GYDTQIRVPS…CHGAGKVKET (79 aa)). 8 residues coordinate Zn(2+): Cys-153, Cys-156, Cys-170, Cys-173, Cys-192, Cys-195, Cys-206, and Cys-209. CXXCXGXG motif repeat units lie at residues 153 to 160 (CEVCHGSG), 170 to 177 (CPTCSGSG), 192 to 199 (CPKCHGTG), and 206 to 213 (CGHCHGAG).

This sequence belongs to the DnaJ family. Homodimer. It depends on Zn(2+) as a cofactor.

The protein localises to the cytoplasm. Participates actively in the response to hyperosmotic and heat shock by preventing the aggregation of stress-denatured proteins and by disaggregating proteins, also in an autonomous, DnaK-independent fashion. Unfolded proteins bind initially to DnaJ; upon interaction with the DnaJ-bound protein, DnaK hydrolyzes its bound ATP, resulting in the formation of a stable complex. GrpE releases ADP from DnaK; ATP binding to DnaK triggers the release of the substrate protein, thus completing the reaction cycle. Several rounds of ATP-dependent interactions between DnaJ, DnaK and GrpE are required for fully efficient folding. Also involved, together with DnaK and GrpE, in the DNA replication of plasmids through activation of initiation proteins. This Paraburkholderia xenovorans (strain LB400) protein is Chaperone protein DnaJ.